Reading from the N-terminus, the 152-residue chain is Deoxyuridine 5'-triphosphate nucleotidohydrolase (152 aa).

Substrate is bound by residues 70–72 (RSG), Asn83, 87–89 (LID), and Met97.

It belongs to the dUTPase family. It depends on Mg(2+) as a cofactor.

The catalysed reaction is dUTP + H2O = dUMP + diphosphate + H(+). It participates in pyrimidine metabolism; dUMP biosynthesis; dUMP from dCTP (dUTP route): step 2/2. This enzyme is involved in nucleotide metabolism: it produces dUMP, the immediate precursor of thymidine nucleotides and it decreases the intracellular concentration of dUTP so that uracil cannot be incorporated into DNA. This Buchnera aphidicola subsp. Baizongia pistaciae (strain Bp) protein is Deoxyuridine 5'-triphosphate nucleotidohydrolase.